The chain runs to 372 residues: Mitogen-activated protein kinase kinase kinase 17 (372 aa).

The Protein kinase domain maps to 3 to 259 (WTRGRILGRG…ATQLLNHPFL (257 aa)). Residues 9–17 (LGRGSTATV) and K32 contribute to the ATP site. D126 (proton acceptor) is an active-site residue. Phosphoserine is present on S312.

Belongs to the protein kinase superfamily. Ser/Thr protein kinase family. Binds to MKK3.

It is found in the nucleus. The catalysed reaction is L-seryl-[protein] + ATP = O-phospho-L-seryl-[protein] + ADP + H(+). It carries out the reaction L-threonyl-[protein] + ATP = O-phospho-L-threonyl-[protein] + ADP + H(+). Its function is as follows. Component of the abscisic acid (ABA) signaling pathway that may act as ABA signal transducer in the context of abiotic stresses. Triggers MPK7 activation in a MKK3-dependent manner. Mediates the ABA-dependent activation of the MKK3-MPK7 module. The protein is Mitogen-activated protein kinase kinase kinase 17 of Arabidopsis thaliana (Mouse-ear cress).